Reading from the N-terminus, the 99-residue chain is Co-chaperonin GroES (99 aa).

The protein belongs to the GroES chaperonin family. In terms of assembly, heptamer of 7 subunits arranged in a ring. Interacts with the chaperonin GroEL.

It localises to the cytoplasm. Together with the chaperonin GroEL, plays an essential role in assisting protein folding. The GroEL-GroES system forms a nano-cage that allows encapsulation of the non-native substrate proteins and provides a physical environment optimized to promote and accelerate protein folding. GroES binds to the apical surface of the GroEL ring, thereby capping the opening of the GroEL channel. This chain is Co-chaperonin GroES, found in Methylacidiphilum infernorum (isolate V4) (Methylokorus infernorum (strain V4)).